Consider the following 295-residue polypeptide: Protein shisa-2 homolog (295 aa).

The first 33 residues, 1–33 (MWGARRSSVSSSWNAASLLQLLLAALLAAGARA), serve as a signal peptide directing secretion. Residues 34-110 (SGEYCHGWLD…RADKDGPDGS (77 aa)) are Extracellular-facing. Positions 87–108 (GCDNDRQQGAGEPGRADKDGPD) are disordered. The helical transmembrane segment at 111–131 (AVPIYVPFLIVGSVFVAFIIL) threads the bilayer. Topologically, residues 132 to 295 (GSLVAACCCR…EQKMYPAVTV (164 aa)) are cytoplasmic. Residues 168-205 (PSASTSRGSSSRQSSTAASSSSSANSGARAPPTRSQTN) form a disordered region. A compositionally biased stretch (low complexity) spans 169 to 197 (SASTSRGSSSRQSSTAASSSSSANSGARA).

The protein belongs to the shisa family.

It localises to the endoplasmic reticulum membrane. In terms of biological role, plays an essential role in the maturation of presomitic mesoderm cells by individual attenuation of both FGF and WNT signaling. The polypeptide is Protein shisa-2 homolog (SHISA2) (Homo sapiens (Human)).